The primary structure comprises 645 residues: Cyclin-D-binding Myb-like transcription factor 1 (645 aa).

2 disordered regions span residues 34 to 71 (QNDG…STEY) and 95 to 119 (RDEE…KKGE). 2 stretches are compositionally biased toward acidic residues: residues 36 to 46 (DGEDLGSDETT) and 95 to 105 (RDEELESDDLS). The region spanning 219–257 (GKYTDEEINKLKELRQKHGNDWATIGSALGRSASSVKDR) is the Myb-like 1 domain. The HTH myb-type domain occupies 262–327 (KDTCNTGKWT…KWLNYLNWKQ (66 aa)). Residues 300–323 (WASVAELVGTRSEKQCRSKWLNYL) constitute a DNA-binding region (H-T-H motif). Positions 333–382 (WTKEDDINLVRRIAELEVEDENEINWDILASGWSSVRSPQWLRSKWWTIK) constitute a Myb-like 2 domain. The disordered stretch occupies residues 568–645 (VKEEPSENQT…ILENQEEGSN (78 aa)). A compositionally biased stretch (basic and acidic residues) spans 587 to 597 (EQSKQGEKTLD). Residues 615 to 625 (IPTNEDISSDS) show a composition bias toward polar residues.

Belongs to the DMTF1 family.

Its subcellular location is the nucleus. Functionally, transcriptional activator which activates the CDKN2A/ARF locus in response to Ras-Raf signaling, thereby promoting p53/TP53-dependent growth arrest. Binds to the consensus sequence 5'-CCCG[GT]ATGT-3'. This is Cyclin-D-binding Myb-like transcription factor 1 (dmtf1) from Danio rerio (Zebrafish).